The sequence spans 631 residues: Chaperone protein DnaK (631 aa).

Position 198 is a phosphothreonine; by autocatalysis (Thr198). Residues 602–631 (EAAGGAQQAGKDDVVDAEFTEVDDDKKKSA) are disordered.

The protein belongs to the heat shock protein 70 family.

Functionally, acts as a chaperone. This chain is Chaperone protein DnaK, found in Rhodopseudomonas palustris (strain ATCC BAA-98 / CGA009).